A 237-amino-acid polypeptide reads, in one-letter code: Phosphoadenosine 5'-phosphosulfate reductase (237 aa).

Cysteine 231 functions as the Nucleophile; cysteine thiosulfonate intermediate in the catalytic mechanism.

Belongs to the PAPS reductase family. CysH subfamily.

It is found in the cytoplasm. It carries out the reaction [thioredoxin]-disulfide + sulfite + adenosine 3',5'-bisphosphate + 2 H(+) = [thioredoxin]-dithiol + 3'-phosphoadenylyl sulfate. Its pathway is sulfur metabolism; hydrogen sulfide biosynthesis; sulfite from sulfate: step 3/3. Functionally, catalyzes the formation of sulfite from phosphoadenosine 5'-phosphosulfate (PAPS) using thioredoxin as an electron donor. The polypeptide is Phosphoadenosine 5'-phosphosulfate reductase (Xylella fastidiosa (strain 9a5c)).